The following is a 175-amino-acid chain: D-glycero-beta-D-manno-heptose-1,7-bisphosphate 7-phosphatase (175 aa).

The Nucleophile role is filled by Asp7. Positions 7 and 9 each coordinate Mg(2+). Substrate-binding positions include 7–9 (DRD), 15–19 (DSDAY), and 50–53 (TNQS). The active-site Proton donor is Asp9. Cys89, His91, Cys97, and Cys99 together coordinate Zn(2+). 100–101 (RK) is a substrate binding site. Position 126 (Asp126) interacts with Mg(2+).

It belongs to the gmhB family. Monomer. Mg(2+) serves as cofactor. The cofactor is Zn(2+).

The protein resides in the cytoplasm. The catalysed reaction is D-glycero-beta-D-manno-heptose 1,7-bisphosphate + H2O = D-glycero-beta-D-manno-heptose 1-phosphate + phosphate. Its pathway is nucleotide-sugar biosynthesis; ADP-L-glycero-beta-D-manno-heptose biosynthesis; ADP-L-glycero-beta-D-manno-heptose from D-glycero-beta-D-manno-heptose 7-phosphate: step 2/4. It participates in bacterial outer membrane biogenesis; LPS core biosynthesis. Converts the D-glycero-beta-D-manno-heptose 1,7-bisphosphate (beta-HBP) intermediate into D-glycero-beta-D-manno-heptose 1-phosphate by removing the phosphate group at the C-7 position. The chain is D-glycero-beta-D-manno-heptose-1,7-bisphosphate 7-phosphatase from Pseudomonas putida (strain ATCC 47054 / DSM 6125 / CFBP 8728 / NCIMB 11950 / KT2440).